Consider the following 159-residue polypeptide: Large ribosomal subunit protein uL11 (159 aa).

It belongs to the universal ribosomal protein uL11 family. Part of the ribosomal stalk of the 50S ribosomal subunit. Interacts with L10 and the large rRNA to form the base of the stalk. L10 forms an elongated spine to which L12 dimers bind in a sequential fashion forming a multimeric L10(L12)X complex.

Its function is as follows. Forms part of the ribosomal stalk which helps the ribosome interact with GTP-bound translation factors. This is Large ribosomal subunit protein uL11 from Methanococcus vannielii (strain ATCC 35089 / DSM 1224 / JCM 13029 / OCM 148 / SB).